A 208-amino-acid chain; its full sequence is Imidazoleglycerol-phosphate dehydratase (208 aa).

Belongs to the imidazoleglycerol-phosphate dehydratase family.

It localises to the cytoplasm. The catalysed reaction is D-erythro-1-(imidazol-4-yl)glycerol 3-phosphate = 3-(imidazol-4-yl)-2-oxopropyl phosphate + H2O. The protein operates within amino-acid biosynthesis; L-histidine biosynthesis; L-histidine from 5-phospho-alpha-D-ribose 1-diphosphate: step 6/9. This Hyphomonas neptunium (strain ATCC 15444) protein is Imidazoleglycerol-phosphate dehydratase.